A 310-amino-acid chain; its full sequence is Methionyl-tRNA formyltransferase (310 aa).

109–112 (SLLP) contributes to the (6S)-5,6,7,8-tetrahydrofolate binding site.

This sequence belongs to the Fmt family.

It catalyses the reaction L-methionyl-tRNA(fMet) + (6R)-10-formyltetrahydrofolate = N-formyl-L-methionyl-tRNA(fMet) + (6S)-5,6,7,8-tetrahydrofolate + H(+). Attaches a formyl group to the free amino group of methionyl-tRNA(fMet). The formyl group appears to play a dual role in the initiator identity of N-formylmethionyl-tRNA by promoting its recognition by IF2 and preventing the misappropriation of this tRNA by the elongation apparatus. This chain is Methionyl-tRNA formyltransferase, found in Agathobacter rectalis (strain ATCC 33656 / DSM 3377 / JCM 17463 / KCTC 5835 / VPI 0990) (Eubacterium rectale).